Here is a 176-residue protein sequence, read N- to C-terminus: Ribosome maturation factor RimM (176 aa).

In terms of domain architecture, PRC barrel spans 103–176 (QNDEYYFYEI…KIVVKELEWI (74 aa)).

It belongs to the RimM family. Binds ribosomal protein uS19.

Its subcellular location is the cytoplasm. Functionally, an accessory protein needed during the final step in the assembly of 30S ribosomal subunit, possibly for assembly of the head region. Essential for efficient processing of 16S rRNA. May be needed both before and after RbfA during the maturation of 16S rRNA. It has affinity for free ribosomal 30S subunits but not for 70S ribosomes. This chain is Ribosome maturation factor RimM, found in Thermotoga neapolitana (strain ATCC 49049 / DSM 4359 / NBRC 107923 / NS-E).